The sequence spans 173 residues: Sporulation-specific protein 12 (173 aa).

Positions M1–T12 are enriched in polar residues. The tract at residues M1–A56 is disordered. Position 2 is an N-acetylserine (S2). A phosphoserine mark is found at S118 and S125. The tract at residues D159–Y173 is negative-charged tail.

It is required for meiosis I chromosome division during sporulation. A component of the FEAR (CDC14 early anaphase release) network which promotes CDC14 release from the nucleolus during early anaphase. This chain is Sporulation-specific protein 12 (SPO12), found in Saccharomyces cerevisiae (strain ATCC 204508 / S288c) (Baker's yeast).